The sequence spans 140 residues: Large ribosomal subunit protein bL17 (140 aa).

A disordered region spans residues 120-140 (EDAKGQDSGPVMVDEDDFAEA).

It belongs to the bacterial ribosomal protein bL17 family. Part of the 50S ribosomal subunit. Contacts protein L32.

The chain is Large ribosomal subunit protein bL17 from Erythrobacter litoralis (strain HTCC2594).